Here is a 20-residue protein sequence, read N- to C-terminus: Alkaline phosphatase (20 aa).

Expressed by the venom gland.

Its subcellular location is the secreted. It carries out the reaction a phosphate monoester + H2O = an alcohol + phosphate. Has hemorrhagic activity. In Deinagkistrodon acutus (Hundred-pace snake), this protein is Alkaline phosphatase.